A 54-amino-acid chain; its full sequence is Large ribosomal subunit protein bL33 (54 aa).

It belongs to the bacterial ribosomal protein bL33 family.

In Rhodopirellula baltica (strain DSM 10527 / NCIMB 13988 / SH1), this protein is Large ribosomal subunit protein bL33.